The primary structure comprises 324 residues: MKPSVILYKALPDDLLQRLQEHFTVHQVANLSPQTVEQNAAIFAEAEGLLGSNENVNAALLEKMPKLRATSTISVGYDNFDVDALTARKILLMHTPTVLTETVADTLMALVLSTARRVVEVAERVKAGEWTASIGPDWYGTDVHHKTLGIVGMGRIGMALAQRAHFGFNMPILYNARRHHKEAEERFNARYCDLDTLLQESDFVCLILPLTDETHHLFGAEQFAKMKSSAIFINAGRGPVVDENALIAALQKGEIHAAGLDVFEQEPLSVDSPLLSMANVVAVPHIGSATHETRYGMAACAVDNLIDALQGKVEKNCVNPHVAD.

Residues arginine 237 and glutamate 266 contribute to the active site. Residue histidine 285 is the Proton donor of the active site.

Belongs to the D-isomer specific 2-hydroxyacid dehydrogenase family. GhrB subfamily. In terms of assembly, homodimer.

It is found in the cytoplasm. It carries out the reaction glycolate + NADP(+) = glyoxylate + NADPH + H(+). The catalysed reaction is (R)-glycerate + NAD(+) = 3-hydroxypyruvate + NADH + H(+). It catalyses the reaction (R)-glycerate + NADP(+) = 3-hydroxypyruvate + NADPH + H(+). Functionally, catalyzes the NADPH-dependent reduction of glyoxylate and hydroxypyruvate into glycolate and glycerate, respectively. In Escherichia coli (strain K12 / MC4100 / BW2952), this protein is Glyoxylate/hydroxypyruvate reductase B.